Here is a 367-residue protein sequence, read N- to C-terminus: tRNA/tmRNA (uracil-C(5))-methyltransferase (367 aa).

S-adenosyl-L-methionine is bound by residues Q190, Y218, N223, E239, and D299. Catalysis depends on C324, which acts as the Nucleophile. The active-site Proton acceptor is the E358.

This sequence belongs to the class I-like SAM-binding methyltransferase superfamily. RNA M5U methyltransferase family. TrmA subfamily.

It catalyses the reaction uridine(54) in tRNA + S-adenosyl-L-methionine = 5-methyluridine(54) in tRNA + S-adenosyl-L-homocysteine + H(+). The catalysed reaction is uridine(341) in tmRNA + S-adenosyl-L-methionine = 5-methyluridine(341) in tmRNA + S-adenosyl-L-homocysteine + H(+). Functionally, dual-specificity methyltransferase that catalyzes the formation of 5-methyluridine at position 54 (m5U54) in all tRNAs, and that of position 341 (m5U341) in tmRNA (transfer-mRNA). This chain is tRNA/tmRNA (uracil-C(5))-methyltransferase, found in Pectobacterium atrosepticum (strain SCRI 1043 / ATCC BAA-672) (Erwinia carotovora subsp. atroseptica).